We begin with the raw amino-acid sequence, 479 residues long: Ribulose bisphosphate carboxylase large chain (479 aa).

A propeptide spanning residues 1 to 2 (MS) is cleaved from the precursor. 2 residues coordinate substrate: Asn123 and Thr173. Lys175 (proton acceptor) is an active-site residue. Lys177 provides a ligand contact to substrate. Positions 201, 203, and 204 each coordinate Mg(2+). Residue Lys201 is modified to N6-carboxylysine. Ser208 bears the Phosphoserine mark. The active-site Proton acceptor is His294. Substrate contacts are provided by Arg295 and His327. Position 330 is a phosphothreonine (Thr330). Ser379 is a binding site for substrate.

This sequence belongs to the RuBisCO large chain family. Type I subfamily. As to quaternary structure, heterohexadecamer of 8 large chains and 8 small chains; disulfide-linked. The disulfide link is formed within the large subunit homodimers. Mg(2+) serves as cofactor. The disulfide bond which can form in the large chain dimeric partners within the hexadecamer appears to be associated with oxidative stress and protein turnover.

The protein resides in the plastid. It localises to the chloroplast. It carries out the reaction 2 (2R)-3-phosphoglycerate + 2 H(+) = D-ribulose 1,5-bisphosphate + CO2 + H2O. It catalyses the reaction D-ribulose 1,5-bisphosphate + O2 = 2-phosphoglycolate + (2R)-3-phosphoglycerate + 2 H(+). In terms of biological role, ruBisCO catalyzes two reactions: the carboxylation of D-ribulose 1,5-bisphosphate, the primary event in carbon dioxide fixation, as well as the oxidative fragmentation of the pentose substrate in the photorespiration process. Both reactions occur simultaneously and in competition at the same active site. The protein is Ribulose bisphosphate carboxylase large chain of Brassica oleracea (Wild cabbage).